A 999-amino-acid chain; its full sequence is Embryonic polarity protein dorsal (999 aa).

Residues 1–44 (MFPNQNNGAAPGQGPAVDGQQSLNYNGLPAQQQQQLAQSTKNVR) form a disordered region. In terms of domain architecture, RHD spans 47-342 (PYVKITEQPA…TFWNLHRHLK (296 aa)). Residue Ser-312 is modified to Phosphoserine; by PKA. 2 disordered regions span residues 389–424 (FNHE…EQYT) and 670–851 (QARK…SVSG). Positions 402–424 (EQEQSVQQEQYTQEQSLQQEQYT) are enriched in low complexity. The Nuclear export signal signature appears at 668–677 (NSQARKPETP). Over residues 677 to 686 (PMRPVPPVPP) the composition is skewed to pro residues. Positions 710–719 (KQDSNAENRS) are enriched in basic and acidic residues. A compositionally biased stretch (polar residues) spans 720-734 (IEANTVQTKPSTGES). The Nuclear localization signal motif lies at 756–773 (KKPGFFSKLFSRRKSKPD). Low complexity-rich tracts occupy residues 819–829 (SNPAPAKSSPV) and 836–851 (SKLT…SVSG).

As to quaternary structure, interacts with tamo via the nuclear localization signal. Interacts with emb, a component of the nuclear export complex. As to expression, in unchallenged larvae, expression of both isoforms is seen in fat body and gut (isoform A is more abundant). After immune challenge levels of both isoforms are enhanced.

Its subcellular location is the cytoplasm. The protein localises to the nucleus. Functionally, embryonic developmental transcription factor. The lateral or ventral identity of a cell depends upon the concentration of this protein in its nucleus during the blastoderm stage. Acts as a morphogenetic transcription factor that specifically binds to the kappa-B-related consensus sequence 5'-GRGAAAANCC-3', located in the enhancer region of zygotic genes such as Zen, Twist, Snail and Decapentaplegic, promoting their expression. Part of a signaling pathway involving NF-kappa-B and Toll-related receptors, that functions in the apoptosis of unfit cells during cell competition. Mediates an immune response in larvae. May be part of a NF-kappa-B and Tollo signaling cascade that regulates development of the peripheral nervous system. The polypeptide is Embryonic polarity protein dorsal (dl) (Drosophila melanogaster (Fruit fly)).